The chain runs to 316 residues: Pantothenate kinase (316 aa).

Residue 95–102 participates in ATP binding; that stretch reads GSVAVGKS.

The protein belongs to the prokaryotic pantothenate kinase family.

The protein localises to the cytoplasm. The catalysed reaction is (R)-pantothenate + ATP = (R)-4'-phosphopantothenate + ADP + H(+). It participates in cofactor biosynthesis; coenzyme A biosynthesis; CoA from (R)-pantothenate: step 1/5. In Sodalis glossinidius (strain morsitans), this protein is Pantothenate kinase.